A 365-amino-acid chain; its full sequence is Phosphoserine aminotransferase (365 aa).

Arg-42 provides a ligand contact to L-glutamate. Pyridoxal 5'-phosphate is bound by residues 76–77 (GR), Trp-102, Thr-156, Asp-175, and Gln-198. Lys-199 is modified (N6-(pyridoxal phosphate)lysine). Position 240-241 (240-241 (NT)) interacts with pyridoxal 5'-phosphate.

Belongs to the class-V pyridoxal-phosphate-dependent aminotransferase family. SerC subfamily. As to quaternary structure, homodimer. Requires pyridoxal 5'-phosphate as cofactor.

Its subcellular location is the cytoplasm. The catalysed reaction is O-phospho-L-serine + 2-oxoglutarate = 3-phosphooxypyruvate + L-glutamate. It carries out the reaction 4-(phosphooxy)-L-threonine + 2-oxoglutarate = (R)-3-hydroxy-2-oxo-4-phosphooxybutanoate + L-glutamate. It participates in amino-acid biosynthesis; L-serine biosynthesis; L-serine from 3-phospho-D-glycerate: step 2/3. It functions in the pathway cofactor biosynthesis; pyridoxine 5'-phosphate biosynthesis; pyridoxine 5'-phosphate from D-erythrose 4-phosphate: step 3/5. Its function is as follows. Catalyzes the reversible conversion of 3-phosphohydroxypyruvate to phosphoserine and of 3-hydroxy-2-oxo-4-phosphonooxybutanoate to phosphohydroxythreonine. In Shewanella oneidensis (strain ATCC 700550 / JCM 31522 / CIP 106686 / LMG 19005 / NCIMB 14063 / MR-1), this protein is Phosphoserine aminotransferase.